The chain runs to 323 residues: Small ribosomal subunit protein uS3 (323 aa).

The 70-residue stretch at 17–86 (IDEFFADELG…DPQIDVQEVD (70 aa)) folds into the KH type-2 domain. Residues 251–303 (ADPGVSSEDEEVVTEPVDIGGDDEDVEDIEVVSDDSGNDTETVAEEVEELDAE) are disordered. Acidic residues predominate over residues 270–303 (GGDDEDVEDIEVVSDDSGNDTETVAEEVEELDAE).

This sequence belongs to the universal ribosomal protein uS3 family. As to quaternary structure, part of the 30S ribosomal subunit.

Binds the lower part of the 30S subunit head. The polypeptide is Small ribosomal subunit protein uS3 (Haloquadratum walsbyi (strain DSM 16790 / HBSQ001)).